Consider the following 131-residue polypeptide: MTDPIADYLTRLRNAIKAKHRVVEVPASNLKKEITKILFDKGYILNFKFVEDGPQGTIKIALKYDLVNKVNAIKKLERVSTPGLRKYTGYKEMPRVLNGLGIAVLSTSKGVMTDKEARDLKIGGEVLCYVY.

It belongs to the universal ribosomal protein uS8 family. Part of the 30S ribosomal subunit. Contacts proteins S5 and S12.

One of the primary rRNA binding proteins, it binds directly to 16S rRNA central domain where it helps coordinate assembly of the platform of the 30S subunit. The chain is Small ribosomal subunit protein uS8 from Parabacteroides distasonis (strain ATCC 8503 / DSM 20701 / CIP 104284 / JCM 5825 / NCTC 11152).